The sequence spans 586 residues: Aspartate--tRNA ligase (586 aa).

E171 serves as a coordination point for L-aspartate. Residues 195-198 (QLFK) form an aspartate region. An L-aspartate-binding site is contributed by R217. ATP is bound by residues 217–219 (RDE) and Q226. H448 contacts L-aspartate. Residue E482 coordinates ATP. R489 serves as a coordination point for L-aspartate. 534 to 537 (GLDR) contributes to the ATP binding site.

The protein belongs to the class-II aminoacyl-tRNA synthetase family. Type 1 subfamily. In terms of assembly, homodimer.

The protein resides in the cytoplasm. It carries out the reaction tRNA(Asp) + L-aspartate + ATP = L-aspartyl-tRNA(Asp) + AMP + diphosphate. In terms of biological role, catalyzes the attachment of L-aspartate to tRNA(Asp) in a two-step reaction: L-aspartate is first activated by ATP to form Asp-AMP and then transferred to the acceptor end of tRNA(Asp). The sequence is that of Aspartate--tRNA ligase from Buchnera aphidicola subsp. Acyrthosiphon pisum (strain 5A).